The sequence spans 337 residues: Homeobox protein knotted-1-like 4 (337 aa).

Disordered stretches follow at residues 1-56 and 159-190; these read MEQQ…SFHE and FTLD…GLPE. The span at 27-38 shows a compositional bias: low complexity; that stretch reads PTSTSTSPAVPS. Positions 200-220 constitute an ELK domain; the sequence is ELKSHLLNKYSGYLSSLWREL. Residues 221-284 constitute a DNA-binding region (homeobox; TALE-type); that stretch reads SKKKKKGKLP…NQRKRHWKPT (64 aa).

It belongs to the TALE/KNOX homeobox family.

It localises to the nucleus. The protein is Homeobox protein knotted-1-like 4 (OSH10) of Oryza sativa subsp. japonica (Rice).